Here is a 265-residue protein sequence, read N- to C-terminus: Sarcotoxin II-1 (265 aa).

A signal peptide spans 1-22 (MKSFVLFAACMAIIALGSLAHA). Residues 23 to 24 (YP) constitute a propeptide, removed by a dipeptidylpeptidase. Q25 is modified (pyrrolidone carboxylic acid). Residue G264 is modified to Glycine amide.

Belongs to the attacin/sarcotoxin-2 family. Synthesized by the fat body and is eventually secreted into the hemolymph.

It is found in the secreted. Its function is as follows. Sarcotoxin II is an antibacterial protein which plays a role in the inflammatory response of this insect. The main effect of sarcotoxin II on E.coli may be the inhibition of cell wall synthesis, including septum formation. The protein is Sarcotoxin II-1 of Sarcophaga peregrina (Flesh fly).